The sequence spans 118 residues: Ribonuclease P protein component (118 aa).

This sequence belongs to the RnpA family. As to quaternary structure, consists of a catalytic RNA component (M1 or rnpB) and a protein subunit.

It catalyses the reaction Endonucleolytic cleavage of RNA, removing 5'-extranucleotides from tRNA precursor.. Functionally, RNaseP catalyzes the removal of the 5'-leader sequence from pre-tRNA to produce the mature 5'-terminus. It can also cleave other RNA substrates such as 4.5S RNA. The protein component plays an auxiliary but essential role in vivo by binding to the 5'-leader sequence and broadening the substrate specificity of the ribozyme. This chain is Ribonuclease P protein component, found in Levilactobacillus brevis (strain ATCC 367 / BCRC 12310 / CIP 105137 / JCM 1170 / LMG 11437 / NCIMB 947 / NCTC 947) (Lactobacillus brevis).